Here is a 201-residue protein sequence, read N- to C-terminus: Recombination protein RecR (201 aa).

The C4-type zinc finger occupies 60–75; sequence CSTCGNVDTADPCMIC. In terms of domain architecture, Toprim spans 83 to 178; the sequence is GTIIVVEDVS…KVTRLAHGVP (96 aa).

Belongs to the RecR family.

Functionally, may play a role in DNA repair. It seems to be involved in an RecBC-independent recombinational process of DNA repair. It may act with RecF and RecO. This is Recombination protein RecR from Mesorhizobium japonicum (strain LMG 29417 / CECT 9101 / MAFF 303099) (Mesorhizobium loti (strain MAFF 303099)).